The primary structure comprises 568 residues: Sulfite reductase [NADPH] hemoprotein beta-component (568 aa).

4 residues coordinate [4Fe-4S] cluster: cysteine 425, cysteine 431, cysteine 470, and cysteine 474. Cysteine 474 serves as a coordination point for siroheme.

It belongs to the nitrite and sulfite reductase 4Fe-4S domain family. Alpha(8)-beta(8). The alpha component is a flavoprotein, the beta component is a hemoprotein. The cofactor is siroheme. [4Fe-4S] cluster serves as cofactor.

It catalyses the reaction hydrogen sulfide + 3 NADP(+) + 3 H2O = sulfite + 3 NADPH + 4 H(+). The protein operates within sulfur metabolism; hydrogen sulfide biosynthesis; hydrogen sulfide from sulfite (NADPH route): step 1/1. Its function is as follows. Component of the sulfite reductase complex that catalyzes the 6-electron reduction of sulfite to sulfide. This is one of several activities required for the biosynthesis of L-cysteine from sulfate. In Xanthomonas campestris pv. campestris (strain ATCC 33913 / DSM 3586 / NCPPB 528 / LMG 568 / P 25), this protein is Sulfite reductase [NADPH] hemoprotein beta-component.